A 309-amino-acid chain; its full sequence is Tumor necrosis factor ligand superfamily member 13B (309 aa).

At 1–47 the chain is on the cytoplasmic side; it reads MDESAKTLPPPCLCFCSEKGEDMKVGYDPITPQKEEGAWFGICRDGR. A helical; Signal-anchor for type II membrane protein membrane pass occupies residues 48-68; it reads LLAATLLLALLSSSFTAMSLY. The Extracellular segment spans residues 69–309; the sequence is QLAALQADLM…DTFFGALKLL (241 aa). Residues 110 to 140 are disordered; that stretch reads PAAPRPHNSSRGHRNRRAFQGPEETEQDVDL. N117 and N266 each carry an N-linked (GlcNAc...) asparagine glycan. Residues 117-126 show a composition bias toward basic residues; the sequence is NSSRGHRNRR. A THD domain is found at 169–308; it reads DCLQLIADSD…DDTFFGALKL (140 aa). Cysteines 256 and 269 form a disulfide.

This sequence belongs to the tumor necrosis factor family. In terms of assembly, homotrimer. Isoform 2 heteromultimerizes with isoform 1, probably limiting the amount of functional isoform 1 on the cell surface. The soluble form derives from the membrane form by proteolytic processing. In terms of processing, isoform 2 is not efficiently shed from the membrane unlike isoform 1. Isoform 2 is expressed in many myeloid cell lines.

It localises to the cell membrane. It is found in the secreted. In terms of biological role, cytokine that binds to TNFRSF13B/TACI and TNFRSF17/BCMA. TNFSF13/APRIL binds to the same 2 receptors. Together, they form a 2 ligands -2 receptors pathway involved in the stimulation of B- and T-cell function and the regulation of humoral immunity. A third B-cell specific BAFF-receptor (BAFFR/BR3) promotes the survival of mature B-cells and the B-cell response. Isoform 2 seems to inhibit isoform 1 secretion and bioactivity. The polypeptide is Tumor necrosis factor ligand superfamily member 13B (Tnfsf13b) (Mus musculus (Mouse)).